The chain runs to 228 residues: Eukaryotic translation initiation factor 6 (228 aa).

Belongs to the eIF-6 family. As to quaternary structure, monomer. Associates with the 60S ribosomal subunit.

The protein localises to the cytoplasm. It is found in the nucleus. It localises to the nucleolus. Functionally, binds to the 60S ribosomal subunit and prevents its association with the 40S ribosomal subunit to form the 80S initiation complex in the cytoplasm. May also be involved in ribosome biogenesis. This Guillardia theta (Cryptophyte) protein is Eukaryotic translation initiation factor 6.